A 190-amino-acid chain; its full sequence is NADH-ubiquinone oxidoreductase 75 kDa subunit, mitochondrial (190 aa).

Belongs to the complex I 75 kDa subunit family. In terms of assembly, core subunit of respiratory chain NADH dehydrogenase (Complex I) which is composed of 45 different subunits. This is the largest subunit of complex I and it is a component of the iron-sulfur (IP) fragment of the enzyme. Complex I associates with ubiquinol-cytochrome reductase complex (Complex III) to form supercomplexes. Interacts with MDM2 and AKAP1. The cofactor is [2Fe-2S] cluster. Requires [4Fe-4S] cluster as cofactor.

The protein resides in the mitochondrion inner membrane. It catalyses the reaction a ubiquinone + NADH + 5 H(+)(in) = a ubiquinol + NAD(+) + 4 H(+)(out). Its function is as follows. Core subunit of the mitochondrial membrane respiratory chain NADH dehydrogenase (Complex I) which catalyzes electron transfer from NADH through the respiratory chain, using ubiquinone as an electron acceptor. Essential for catalysing the entry and efficient transfer of electrons within complex I. Plays a key role in the assembly and stability of complex I and participates in the association of complex I with ubiquinol-cytochrome reductase complex (Complex III) to form supercomplexes. The protein is NADH-ubiquinone oxidoreductase 75 kDa subunit, mitochondrial of Mesocricetus auratus (Golden hamster).